A 145-amino-acid polypeptide reads, in one-letter code: Large ribosomal subunit protein uL14m (145 aa).

Residues 1–30 constitute a mitochondrion transit peptide; that stretch reads MAFFTGLWGPFTCVSRVLSHHCFSTTGSLS.

The protein belongs to the universal ribosomal protein uL14 family. In terms of assembly, component of the mitochondrial large ribosomal subunit (mt-LSU). Mature mammalian 55S mitochondrial ribosomes consist of a small (28S) and a large (39S) subunit. The 28S small subunit contains a 12S ribosomal RNA (12S mt-rRNA) and 30 different proteins. The 39S large subunit contains a 16S rRNA (16S mt-rRNA), a copy of mitochondrial valine transfer RNA (mt-tRNA(Val)), which plays an integral structural role, and 52 different proteins. Interacts with MALSU1.

It is found in the mitochondrion. In terms of biological role, forms part of 2 intersubunit bridges in the assembled ribosome. Upon binding to MALSU1 intersubunit bridge formation is blocked, preventing ribosome formation and repressing translation. The chain is Large ribosomal subunit protein uL14m (MRPL14) from Homo sapiens (Human).